We begin with the raw amino-acid sequence, 614 residues long: 1-deoxy-D-xylulose-5-phosphate synthase (614 aa).

Residues histidine 76 and 117-119 (GHS) contribute to the thiamine diphosphate site. Aspartate 148 contacts Mg(2+). Thiamine diphosphate is bound by residues 149 to 150 (GA), asparagine 177, tyrosine 285, and glutamate 366. Residue asparagine 177 participates in Mg(2+) binding.

Belongs to the transketolase family. DXPS subfamily. As to quaternary structure, homodimer. It depends on Mg(2+) as a cofactor. Thiamine diphosphate is required as a cofactor.

The enzyme catalyses D-glyceraldehyde 3-phosphate + pyruvate + H(+) = 1-deoxy-D-xylulose 5-phosphate + CO2. The protein operates within metabolic intermediate biosynthesis; 1-deoxy-D-xylulose 5-phosphate biosynthesis; 1-deoxy-D-xylulose 5-phosphate from D-glyceraldehyde 3-phosphate and pyruvate: step 1/1. In terms of biological role, catalyzes the acyloin condensation reaction between C atoms 2 and 3 of pyruvate and glyceraldehyde 3-phosphate to yield 1-deoxy-D-xylulose-5-phosphate (DXP). The chain is 1-deoxy-D-xylulose-5-phosphate synthase from Pasteurella multocida (strain Pm70).